Here is a 472-residue protein sequence, read N- to C-terminus: Levansucrase (472 aa).

The first 29 residues, 1-29, serve as a signal peptide directing secretion; it reads MNIKKIVKQATVLTFTTALLAGGATQAFA. Sucrose-binding residues include W85, D86, and S164. D86 acts as the Nucleophile in catalysis. D241 contributes to the Ca(2+) binding site. Residues R246 and D247 each contribute to the sucrose site. Residues Q272, L308, N310, and D339 each coordinate Ca(2+). Sucrose is bound at residue E340. E342 serves as the catalytic Proton donor/acceptor. Residue R360 participates in sucrose binding.

This sequence belongs to the glycosyl hydrolase 68 family.

It localises to the secreted. The enzyme catalyses [6)-beta-D-fructofuranosyl-(2-&gt;](n) alpha-D-glucopyranoside + sucrose = [6)-beta-D-fructofuranosyl-(2-&gt;](n+1) alpha-D-glucopyranoside + D-glucose. Its activity is regulated as follows. Ca(2+) may play an important structural role and promote stability of levansucrase. Catalyzes the synthesis of levan, a fructose polymer, by transferring the fructosyl moiety from sucrose to a growing acceptor molecule. Also displays sucrose hydrolase activity. The polypeptide is Levansucrase (Bacillus amyloliquefaciens (Bacillus velezensis)).